Consider the following 194-residue polypeptide: Amidophosphoribosyltransferase (194 aa).

Residues 1–11 (MPHEPKGLNEE) constitute a propeptide that is removed on maturation. Residue cysteine 12 is the Nucleophile of the active site. A Glutamine amidotransferase type-2 domain is found at 12-194 (CGVFGVWGNP…PHGFRPMVVG (183 aa)).

In the C-terminal section; belongs to the purine/pyrimidine phosphoribosyltransferase family.

It catalyses the reaction 5-phospho-beta-D-ribosylamine + L-glutamate + diphosphate = 5-phospho-alpha-D-ribose 1-diphosphate + L-glutamine + H2O. It participates in purine metabolism; IMP biosynthesis via de novo pathway; N(1)-(5-phospho-D-ribosyl)glycinamide from 5-phospho-alpha-D-ribose 1-diphosphate: step 1/2. Its function is as follows. Catalyzes the formation of phosphoribosylamine from phosphoribosylpyrophosphate (PRPP) and glutamine. In Lacticaseibacillus casei (Lactobacillus casei), this protein is Amidophosphoribosyltransferase.